We begin with the raw amino-acid sequence, 211 residues long: Pyruvate dehydrogenase E1 component subunit beta, mitochondrial (211 aa).

Position 31 is a phosphotyrosine (tyrosine 31). Residues isoleucine 48, alanine 96, isoleucine 97, aspartate 99, and asparagine 101 each coordinate K(+).

Heterotetramer of two PDHA1 and two PDHB subunits. The heterotetramer interacts with DLAT, and is part of the multimeric pyruvate dehydrogenase complex that contains multiple copies of pyruvate dehydrogenase (E1), dihydrolipoamide acetyltransferase (DLAT, E2) and lipoamide dehydrogenase (DLD, E3). These subunits are bound to an inner core composed of about 48 DLAT and 12 PDHX molecules. Interacts with DLAT. The cofactor is thiamine diphosphate.

It localises to the mitochondrion matrix. It catalyses the reaction N(6)-[(R)-lipoyl]-L-lysyl-[protein] + pyruvate + H(+) = N(6)-[(R)-S(8)-acetyldihydrolipoyl]-L-lysyl-[protein] + CO2. The pyruvate dehydrogenase complex catalyzes the overall conversion of pyruvate to acetyl-CoA and CO(2), and thereby links the glycolytic pathway to the tricarboxylic cycle. In Mesocricetus auratus (Golden hamster), this protein is Pyruvate dehydrogenase E1 component subunit beta, mitochondrial.